Reading from the N-terminus, the 410-residue chain is Mannosyl phosphorylinositol ceramide synthase regulatory protein CSG2 (410 aa).

Positions M1–Q17 are cleaved as a signal peptide. The Lumenal portion of the chain corresponds to T18 to S50. N-linked (GlcNAc...) asparagine glycans are attached at residues N35 and N49. A helical membrane pass occupies residues S51 to A71. The Cytoplasmic segment spans residues S72–K141. A helical membrane pass occupies residues L142–S161. Topologically, residues L162–D167 are lumenal. Residues V168–C187 form a helical membrane-spanning segment. Residues G188–R197 lie on the Cytoplasmic side of the membrane. The helical transmembrane segment at N198–A217 threads the bilayer. Residues T218 to K245 lie on the Lumenal side of the membrane. A helical transmembrane segment spans residues G246 to N265. Topologically, residues R266 to Q285 are cytoplasmic. Residues S286–P305 form a helical membrane-spanning segment. Residues K306 to S324 are Lumenal-facing. The chain crosses the membrane as a helical span at residues F325–I344. The Cytoplasmic segment spans residues L345–Y355. The helical transmembrane segment at L356 to C374 threads the bilayer. The Lumenal portion of the chain corresponds to E375–E385. The chain crosses the membrane as a helical span at residues V386–G404. Residues E405–H410 are Cytoplasmic-facing.

As to quaternary structure, heterodimer of CSH1 and CSG2, and SUR1 and CSG2.

It localises to the endoplasmic reticulum membrane. In terms of biological role, required for calcium regulation. May regulate calcium accumulation by a non-vacuole organelle. Also regulates the activity of CSH1 and SUR1 during mannosyl phosphorylinositol ceramide synthesis. The chain is Mannosyl phosphorylinositol ceramide synthase regulatory protein CSG2 (CSG2) from Saccharomyces cerevisiae (strain ATCC 204508 / S288c) (Baker's yeast).